A 248-amino-acid polypeptide reads, in one-letter code: Glutamine-binding periplasmic protein (248 aa).

A signal peptide spans 1–22 (MKSVLKVSLAALTLAFAVSSHA).

Belongs to the bacterial solute-binding protein 3 family.

The protein localises to the periplasm. Functionally, involved in a glutamine-transport system GlnHPQ. The polypeptide is Glutamine-binding periplasmic protein (glnH) (Escherichia coli O157:H7).